A 476-amino-acid polypeptide reads, in one-letter code: Aspartyl/glutamyl-tRNA(Asn/Gln) amidotransferase subunit B (476 aa).

This sequence belongs to the GatB/GatE family. GatB subfamily. Heterotrimer of A, B and C subunits.

It carries out the reaction L-glutamyl-tRNA(Gln) + L-glutamine + ATP + H2O = L-glutaminyl-tRNA(Gln) + L-glutamate + ADP + phosphate + H(+). The enzyme catalyses L-aspartyl-tRNA(Asn) + L-glutamine + ATP + H2O = L-asparaginyl-tRNA(Asn) + L-glutamate + ADP + phosphate + 2 H(+). Allows the formation of correctly charged Asn-tRNA(Asn) or Gln-tRNA(Gln) through the transamidation of misacylated Asp-tRNA(Asn) or Glu-tRNA(Gln) in organisms which lack either or both of asparaginyl-tRNA or glutaminyl-tRNA synthetases. The reaction takes place in the presence of glutamine and ATP through an activated phospho-Asp-tRNA(Asn) or phospho-Glu-tRNA(Gln). The sequence is that of Aspartyl/glutamyl-tRNA(Asn/Gln) amidotransferase subunit B from Neisseria meningitidis serogroup B (strain ATCC BAA-335 / MC58).